We begin with the raw amino-acid sequence, 284 residues long: Dihydropteroate synthase (284 aa).

Residues 6 to 265 (VQVIGVLNVT…DVRASVDALK (260 aa)) enclose the Pterin-binding domain. Asparagine 13 provides a ligand contact to Mg(2+). Residues threonine 53, aspartate 86, asparagine 105, aspartate 177, lysine 213, and 253 to 255 (RVH) each bind (7,8-dihydropterin-6-yl)methyl diphosphate.

The protein belongs to the DHPS family. As to quaternary structure, homodimer. Mg(2+) is required as a cofactor.

The catalysed reaction is (7,8-dihydropterin-6-yl)methyl diphosphate + 4-aminobenzoate = 7,8-dihydropteroate + diphosphate. Its pathway is cofactor biosynthesis; tetrahydrofolate biosynthesis; 7,8-dihydrofolate from 2-amino-4-hydroxy-6-hydroxymethyl-7,8-dihydropteridine diphosphate and 4-aminobenzoate: step 1/2. With respect to regulation, is potently inhibited by the sulfone dapsone and the two sulfonamides sulfamethoxazole and sulfamethoxypyridazine, with Kis in the range of 12 to 32 nM. To a lesser extent, is also inhibited by p-aminosalicylate (PAS). Its function is as follows. Catalyzes the condensation of para-aminobenzoate (pABA) with 6-hydroxymethyl-7,8-dihydropterin diphosphate (DHPt-PP) to form 7,8-dihydropteroate, the immediate precursor of folate derivatives. The polypeptide is Dihydropteroate synthase (folP1) (Mycobacterium leprae (strain TN)).